Here is a 382-residue protein sequence, read N- to C-terminus: Cytochrome c biogenesis CcmF N-terminal-like mitochondrial protein 1 (382 aa).

Transmembrane regions (helical) follow at residues 1–21 (MSIS…FVAF), 30–50 (AFGA…LLFC), 79–99 (HEGS…FFCY), and 117–137 (SLFF…LLRY).

The protein belongs to the CcmF/CycK/Ccl1/NrfE/CcsA family. Interacts with CCMFN2 and CCMH.

The protein localises to the mitochondrion inner membrane. Forms a complex with CCMFC, CCMFN2 and CCMH that performs the assembly of heme with c-type apocytochromes in mitochondria. The sequence is that of Cytochrome c biogenesis CcmF N-terminal-like mitochondrial protein 1 from Arabidopsis thaliana (Mouse-ear cress).